The chain runs to 468 residues: 3-isopropylmalate dehydratase large subunit (468 aa).

[4Fe-4S] cluster is bound by residues cysteine 349, cysteine 409, and cysteine 412.

This sequence belongs to the aconitase/IPM isomerase family. LeuC type 1 subfamily. In terms of assembly, heterodimer of LeuC and LeuD. It depends on [4Fe-4S] cluster as a cofactor.

It carries out the reaction (2R,3S)-3-isopropylmalate = (2S)-2-isopropylmalate. The protein operates within amino-acid biosynthesis; L-leucine biosynthesis; L-leucine from 3-methyl-2-oxobutanoate: step 2/4. Its function is as follows. Catalyzes the isomerization between 2-isopropylmalate and 3-isopropylmalate, via the formation of 2-isopropylmaleate. This Roseobacter denitrificans (strain ATCC 33942 / OCh 114) (Erythrobacter sp. (strain OCh 114)) protein is 3-isopropylmalate dehydratase large subunit.